The sequence spans 61 residues: Outer membrane lipoprotein YnbE (61 aa).

Positions 1 to 16 are cleaved as a signal peptide; the sequence is MKILLAALTSSFMLVG. A lipid anchor (N-palmitoyl cysteine) is attached at cysteine 17. Cysteine 17 is lipidated: S-diacylglycerol cysteine.

This sequence belongs to the lipoprotein YnbE family. In terms of assembly, interacts with the C-terminal region of the probable phospholipid transport protein YdbH.

It is found in the cell outer membrane. In terms of biological role, involved in outer membrane lipid homeostasis. Interacts with the inner membrane protein YdbH to form a functional protein bridge connecting the inner and outer membranes of the cell. Is required for YdbH's function and may facilitate phospholipid transport through the periplasm. This is Outer membrane lipoprotein YnbE (ynbE) from Escherichia coli O6:H1 (strain CFT073 / ATCC 700928 / UPEC).